Reading from the N-terminus, the 43-residue chain is Venom protein E2 (43 aa).

Intrachain disulfides connect Cys3–Cys20 and Cys14–Cys39.

In terms of tissue distribution, expressed by the venom gland.

Its subcellular location is the secreted. In terms of biological role, neurotoxin. Blocks muscular nicotinic acetylcholine receptors (nAChR). In Micrurus pyrrhocryptus (Coral snake), this protein is Venom protein E2.